The following is a 117-amino-acid chain: Ig heavy chain V region 23 (117 aa).

The first 19 residues, methionine 1 to serine 19, serve as a signal peptide directing secretion. The tract at residues glutamine 20 to threonine 49 is framework-1. A disulfide bridge connects residues cysteine 41 and cysteine 115. A complementarity-determining-1 region spans residues serine 50 to histidine 54. The interval tryptophan 55–glycine 68 is framework-2. Residues asparagine 69–serine 85 form a complementarity-determining-2 region. The tract at residues lysine 86–arginine 117 is framework-3.

In Mus musculus (Mouse), this protein is Ig heavy chain V region 23.